Consider the following 474-residue polypeptide: Probable periplasmic serine endoprotease DegP-like (474 aa).

Residues methionine 1–alanine 26 form the signal peptide. Catalysis depends on charge relay system residues histidine 116, aspartate 146, and serine 219. Residues glycine 217–serine 219 and leucine 274–isoleucine 278 each bind substrate. PDZ domains lie at leucine 263–glycine 354 and threonine 360–glycine 462.

Belongs to the peptidase S1C family.

It is found in the periplasm. The enzyme catalyses Acts on substrates that are at least partially unfolded. The cleavage site P1 residue is normally between a pair of hydrophobic residues, such as Val-|-Val.. Its function is as follows. Might be efficient in the degradation of transiently denatured and unfolded proteins which accumulate in the periplasm following stress conditions. This is Probable periplasmic serine endoprotease DegP-like (mucD) from Halomonas elongata (strain ATCC 33173 / DSM 2581 / NBRC 15536 / NCIMB 2198 / 1H9).